Consider the following 693-residue polypeptide: Elongation factor G 1 (693 aa).

Positions 4–281 constitute a tr-type G domain; sequence NKLRNIGISA…AVTRFLPSPH (278 aa). GTP is bound by residues 13 to 20, 80 to 84, and 134 to 137; these read AHIDSGKT, DTPGH, and NKCD.

It belongs to the TRAFAC class translation factor GTPase superfamily. Classic translation factor GTPase family. EF-G/EF-2 subfamily.

The protein localises to the cytoplasm. Catalyzes the GTP-dependent ribosomal translocation step during translation elongation. During this step, the ribosome changes from the pre-translocational (PRE) to the post-translocational (POST) state as the newly formed A-site-bound peptidyl-tRNA and P-site-bound deacylated tRNA move to the P and E sites, respectively. Catalyzes the coordinated movement of the two tRNA molecules, the mRNA and conformational changes in the ribosome. In Borreliella afzelii (strain PKo) (Borrelia afzelii), this protein is Elongation factor G 1.